Here is a 212-residue protein sequence, read N- to C-terminus: Large ribosomal subunit protein uL1 (212 aa).

This sequence belongs to the universal ribosomal protein uL1 family. As to quaternary structure, part of the 50S ribosomal subunit.

Functionally, binds directly to 23S rRNA. Probably involved in E site tRNA release. Its function is as follows. Protein L1 is also a translational repressor protein, it controls the translation of its operon by binding to its mRNA. The chain is Large ribosomal subunit protein uL1 from Methanothrix thermoacetophila (strain DSM 6194 / JCM 14653 / NBRC 101360 / PT) (Methanosaeta thermophila).